Here is a 204-residue protein sequence, read N- to C-terminus: Probable nicotinate-nucleotide adenylyltransferase (204 aa).

The protein belongs to the NadD family.

The enzyme catalyses nicotinate beta-D-ribonucleotide + ATP + H(+) = deamido-NAD(+) + diphosphate. Its pathway is cofactor biosynthesis; NAD(+) biosynthesis; deamido-NAD(+) from nicotinate D-ribonucleotide: step 1/1. Its function is as follows. Catalyzes the reversible adenylation of nicotinate mononucleotide (NaMN) to nicotinic acid adenine dinucleotide (NaAD). This Mycolicibacterium gilvum (strain PYR-GCK) (Mycobacterium gilvum (strain PYR-GCK)) protein is Probable nicotinate-nucleotide adenylyltransferase.